The following is a 196-amino-acid chain: dTTP/UTP pyrophosphatase (196 aa).

Asp-78 serves as the catalytic Proton acceptor.

This sequence belongs to the Maf family. YhdE subfamily. A divalent metal cation serves as cofactor.

The protein resides in the cytoplasm. It catalyses the reaction dTTP + H2O = dTMP + diphosphate + H(+). The catalysed reaction is UTP + H2O = UMP + diphosphate + H(+). Its function is as follows. Nucleoside triphosphate pyrophosphatase that hydrolyzes dTTP and UTP. May have a dual role in cell division arrest and in preventing the incorporation of modified nucleotides into cellular nucleic acids. This chain is dTTP/UTP pyrophosphatase, found in Photobacterium profundum (strain SS9).